Here is a 348-residue protein sequence, read N- to C-terminus: Ferredoxin--NADP reductase (348 aa).

8 residues coordinate FAD: Thr25, Glu44, Gln52, Tyr57, Val97, Phe132, Asp298, and Ser339.

It belongs to the ferredoxin--NADP reductase type 2 family. In terms of assembly, homodimer. It depends on FAD as a cofactor.

The enzyme catalyses 2 reduced [2Fe-2S]-[ferredoxin] + NADP(+) + H(+) = 2 oxidized [2Fe-2S]-[ferredoxin] + NADPH. The polypeptide is Ferredoxin--NADP reductase (Chlorobium phaeobacteroides (strain BS1)).